The primary structure comprises 270 residues: Phosphatidylglycerol--prolipoprotein diacylglyceryl transferase (270 aa).

3 helical membrane-spanning segments follow: residues 17–37 (LAIH…MFLG), 63–83 (ILFL…CLFY), and 95–115 (IFYI…VIAS). Arginine 146 provides a ligand contact to a 1,2-diacyl-sn-glycero-3-phospho-(1'-sn-glycerol). Transmembrane regions (helical) follow at residues 182–202 (SQVY…WLYA), 209–229 (GEVA…AEYF), and 243–263 (MSMG…LWVW).

The protein belongs to the Lgt family.

It localises to the cell inner membrane. The catalysed reaction is L-cysteinyl-[prolipoprotein] + a 1,2-diacyl-sn-glycero-3-phospho-(1'-sn-glycerol) = an S-1,2-diacyl-sn-glyceryl-L-cysteinyl-[prolipoprotein] + sn-glycerol 1-phosphate + H(+). It participates in protein modification; lipoprotein biosynthesis (diacylglyceryl transfer). Catalyzes the transfer of the diacylglyceryl group from phosphatidylglycerol to the sulfhydryl group of the N-terminal cysteine of a prolipoprotein, the first step in the formation of mature lipoproteins. This Paracidovorax citrulli (strain AAC00-1) (Acidovorax citrulli) protein is Phosphatidylglycerol--prolipoprotein diacylglyceryl transferase.